A 493-amino-acid chain; its full sequence is Flagellin (493 aa).

The protein belongs to the bacterial flagellin family.

The protein localises to the secreted. The protein resides in the bacterial flagellum. Its function is as follows. Flagellin is the subunit protein which polymerizes to form the filaments of bacterial flagella. The protein is Flagellin (fliC) of Salmonella rubislaw.